A 1248-amino-acid chain; its full sequence is Reverse gyrase 1 (1248 aa).

An RG N-terminal-type zinc finger spans residues 7–44; sequence IPPSIYLFSCPNCGRSISTYRLLLGSVCNICLEEDKEY. The Zn(2+) site is built by Cys-16, Cys-19, Cys-34, and Cys-37. ATP contacts are provided by residues Gln-92 and 109 to 116; that span reads APPGLGKT. The Helicase ATP-binding domain maps to 96–262; the sequence is IYRLLSGESF…KKYRENTQKN (167 aa). The short motif at 219 to 222 is the DEAD box element; the sequence is DDVD. The topoisomerase I stretch occupies residues 621–1248; sequence QKVKTVLLVV…QVYEEINEIR (628 aa). In terms of domain architecture, Toprim spans 625–789; that stretch reads TVLLVVESPN…NIRRAEFHEV (165 aa). Mg(2+) is bound at residue Glu-631. Residues 706–735 form an RG C-terminal-type; atypical zinc finger; the sequence is IKKCENNHQFTDFFESNKCPRCMTTKVRYD. Zn(2+)-binding residues include Cys-709, His-713, Cys-724, and Cys-727. Residue Asp-758 participates in Mg(2+) binding. The Topo IA-type catalytic domain occupies 805–1248; sequence NVNLVKSQLV…QVYEEINEIR (444 aa). The O-(5'-phospho-DNA)-tyrosine intermediate role is filled by Tyr-965.

It in the N-terminal section; belongs to the DEAD box helicase family. DDVD subfamily. This sequence in the C-terminal section; belongs to the type IA topoisomerase family. In terms of assembly, monomer. Requires Zn(2+) as cofactor. It depends on Mg(2+) as a cofactor. In terms of processing, the N-terminus is blocked.

The protein localises to the cytoplasm. The catalysed reaction is ATP + H2O = ADP + phosphate + H(+). In terms of biological role, modifies the topological state of DNA by introducing positive supercoils in an ATP-dependent process. Increases the linking number in steps of +1. Has a DNA-stimulated ATPase activity; closed circular ssDNA stimulates ATPase much better than dsDNA although negative supercoiled, positive supercoiled and relaxed dsDNA all stimulate ATPase activity. All NTPs permit topoisomerization (relaxation) of negatively supercoiled dsDNA without nucleotide hydrolysis. It transiently cleaves a single DNA strand and remains covalently bound to the 5' DNA end. Acts via a tyrosine residue. Reverse gyrase binds and unwinds DNA independently of ATP binding and DNA cleavage. May be involved in rewinding the DNA strands in the regions of the chromosome that have opened up to allow transcription or replication, probably acts via ssDNA regions of the chromosome. The sequence is that of Reverse gyrase 1 from Sulfolobus acidocaldarius (strain ATCC 33909 / DSM 639 / JCM 8929 / NBRC 15157 / NCIMB 11770).